A 57-amino-acid polypeptide reads, in one-letter code: Protein Ric1 (57 aa).

2 helical membrane-spanning segments follow: residues 8–28 (IPRL…QVGC) and 34–54 (INCL…VYIL).

The protein belongs to the UPF0057 (PMP3) family.

It localises to the membrane. The sequence is that of Protein Ric1 (RIC1) from Phytophthora infestans (Potato late blight agent).